Consider the following 474-residue polypeptide: Protein nucleotidyltransferase YdiU (474 aa).

ATP contacts are provided by glycine 89, glycine 91, arginine 92, lysine 112, aspartate 124, glycine 125, arginine 178, and arginine 185. The active-site Proton acceptor is the aspartate 262. Positions 263 and 272 each coordinate Mg(2+). Aspartate 272 provides a ligand contact to ATP.

It belongs to the SELO family. It depends on Mg(2+) as a cofactor. Mn(2+) serves as cofactor.

The catalysed reaction is L-seryl-[protein] + ATP = 3-O-(5'-adenylyl)-L-seryl-[protein] + diphosphate. It catalyses the reaction L-threonyl-[protein] + ATP = 3-O-(5'-adenylyl)-L-threonyl-[protein] + diphosphate. The enzyme catalyses L-tyrosyl-[protein] + ATP = O-(5'-adenylyl)-L-tyrosyl-[protein] + diphosphate. It carries out the reaction L-histidyl-[protein] + UTP = N(tele)-(5'-uridylyl)-L-histidyl-[protein] + diphosphate. The catalysed reaction is L-seryl-[protein] + UTP = O-(5'-uridylyl)-L-seryl-[protein] + diphosphate. It catalyses the reaction L-tyrosyl-[protein] + UTP = O-(5'-uridylyl)-L-tyrosyl-[protein] + diphosphate. Nucleotidyltransferase involved in the post-translational modification of proteins. It can catalyze the addition of adenosine monophosphate (AMP) or uridine monophosphate (UMP) to a protein, resulting in modifications known as AMPylation and UMPylation. This chain is Protein nucleotidyltransferase YdiU, found in Trichodesmium erythraeum (strain IMS101).